A 284-amino-acid chain; its full sequence is LQWARKRKIPSIQHDALLGKLSVSTQEGRLRDGTHDKLYSYGGRGFSVLRSDTMERIYDSGSIVEESHAMQYPKLFNSYAKSSVNITDTQDSRSDSKGPECESLAVAYSGTRVIVFVGCERPGTISIYSFNSNMTEGTLESIYSGAKTVLGTWGEAFDGGLLTDMDTDDIKYLPPFQSPTGQPLLVVTGSDTGTVSLFHVRGLDNPLPNPRVNSRVPVKPLQSSPLPESTPKSSTKTSSASPIKSRQGKKLRGKKQNKTGNTRFTYRNNKRNIKFKAGRKNNRN.

Residues 202-284 (GLDNPLPNPR…FKAGRKNNRN (83 aa)) form a disordered region. A compositionally biased stretch (low complexity) spans 223-245 (SSPLPESTPKSSTKTSSASPIKS). Residues 246 to 257 (RQGKKLRGKKQN) show a composition bias toward basic residues. Positions 258-267 (KTGNTRFTYR) are enriched in polar residues. Over residues 268-284 (NNKRNIKFKAGRKNNRN) the composition is skewed to basic residues.

Component of the organic matrix of calcified shell layers.

This chain is Gigasin-3a, found in Magallana gigas (Pacific oyster).